We begin with the raw amino-acid sequence, 101 residues long: Small ribosomal subunit protein uS14 (101 aa).

This sequence belongs to the universal ribosomal protein uS14 family. In terms of assembly, part of the 30S ribosomal subunit. Contacts proteins S3 and S10.

In terms of biological role, binds 16S rRNA, required for the assembly of 30S particles and may also be responsible for determining the conformation of the 16S rRNA at the A site. The protein is Small ribosomal subunit protein uS14 of Phenylobacterium zucineum (strain HLK1).